Consider the following 768-residue polypeptide: MTTEDHLLRTASQHSDSSGFAEDSTDCLSLNHLQVQESLQAMGSSADSCDSETTVTSLGEDLATPTAQDQPYFNESEEESLVPLQKGLEKAAAIADRRKSGSQDFPQCNTIENPGTKQSTCSPGDRVTEITEVEEDLFPAETVELLREASAESDVDKSSECEFTQYTTHHILKSLASIEAKCSDMSSENTTGPPSSVDRVNTALQRAQMKVCTLSNQRMGRSLLKSKDLLKQRYLFAKVGYPLRRSQSLPTTLLSPVRVVSSVNVRLSPGKETRCSPPSFTYKYTPEEEQELEKRAMEHDGQSLVKSTIFISPSSVKKEEAPQSEAPRVEECHHGRTPTCSRLAPPPMSQSTCSLHSIHSEWQERPLCEHTRTLSTHSVPNISGATCSAFASPFGCPYSHRHATYPYRVCSVNPPSAIEMQLRRVLHDIRNSLQNLSQYPMMRGPDPAAAPYSTQKSSVLPLYENTFQELQVMRRSLNLFRTQMMDLELAMLRQQTMVYHHMTEEERFEVDQLQGLRNSVRMELQDLELQLEERLLGLEEQLRAVRMPSPFRSSALMGMCGSRSADNLSCPSPLNVMEPVTELMQEQSYLKSELGLGLGEMGFEIPPGESSESVFSQATSESSSVCSGPSHANRRTGVPSTASVGKPKTPLVARKKVFRASVALTPTAPSRTGSVQTPPDLESSEEVDAAEEAPEVVGPKSEVEEGHGKLPSMPAAEEMHKNVEQDELQQVIREIKESIVGEIRREIVSGLLAAVSSSKASNSKQDNH.

Disordered regions lie at residues 1–24 (MTTE…AEDS), 39–78 (LQAM…ESEE), and 98–124 (RKSG…CSPG). 2 stretches are compositionally biased toward polar residues: residues 39–57 (LQAM…TVTS) and 102–122 (SQDF…STCS). 8 positions are modified to phosphoserine: serine 153, serine 177, serine 246, serine 248, serine 255, serine 268, serine 276, and serine 312. Residues 315–338 (SVKKEEAPQSEAPRVEECHHGRTP) form a disordered region. Residues 316–334 (VKKEEAPQSEAPRVEECHH) are compositionally biased toward basic and acidic residues. Lysine 317 is covalently cross-linked (Glycyl lysine isopeptide (Lys-Gly) (interchain with G-Cter in SUMO2)). Phosphoserine occurs at positions 378 and 411. The stretch at 468–546 (QELQVMRRSL…GLEEQLRAVR (79 aa)) forms a coiled coil. Phosphoserine occurs at positions 549, 564, 569, 572, 627, and 643. Disordered stretches follow at residues 605–647 (IPPG…VGKP) and 663–718 (ALTP…AAEE). Over residues 610–627 (SSESVFSQATSESSSVCS) the composition is skewed to polar residues. At threonine 665 the chain carries Phosphothreonine. The segment covering 667–677 (TAPSRTGSVQT) has biased composition (polar residues). Position 670 is a phosphoserine (serine 670). Threonine 677 is subject to Phosphothreonine. Residues 682 to 694 (ESSEEVDAAEEAP) are compositionally biased toward acidic residues.

It is found in the cytoplasm. The chain is Protein ITPRID2 from Pongo abelii (Sumatran orangutan).